Reading from the N-terminus, the 153-residue chain is Protein eva-1 homolog A (153 aa).

Residues 37 to 57 (ALYFVCGVCLGLVLTLIALVV) traverse the membrane as a helical segment. A disordered region spans residues 66 to 97 (KTQQAPKKTGKTVENTSDTSDSDSDWDNTSDL).

Belongs to the EVA1 family.

The protein resides in the endoplasmic reticulum membrane. It is found in the lysosome membrane. Its function is as follows. Acts as a regulator of programmed cell death, mediating both autophagy and apoptosis. This is Protein eva-1 homolog A (Eva1a) from Danio rerio (Zebrafish).